The chain runs to 506 residues: UDP-N-acetylmuramoylalanine--D-glutamate ligase (506 aa).

128–134 (GTNGKTT) contacts ATP.

Belongs to the MurCDEF family.

Its subcellular location is the cytoplasm. It catalyses the reaction UDP-N-acetyl-alpha-D-muramoyl-L-alanine + D-glutamate + ATP = UDP-N-acetyl-alpha-D-muramoyl-L-alanyl-D-glutamate + ADP + phosphate + H(+). It functions in the pathway cell wall biogenesis; peptidoglycan biosynthesis. Functionally, cell wall formation. Catalyzes the addition of glutamate to the nucleotide precursor UDP-N-acetylmuramoyl-L-alanine (UMA). This Albidiferax ferrireducens (strain ATCC BAA-621 / DSM 15236 / T118) (Rhodoferax ferrireducens) protein is UDP-N-acetylmuramoylalanine--D-glutamate ligase.